We begin with the raw amino-acid sequence, 889 residues long: MGGCFSVSLPCDQVVSQFSQLLCVRGSYIHNLSKNLASLQKAMRMLKARQYDVIRRLETEEFTGRQQRLSQVQVWLTSVLIIQNQFNDLLRSNEVELQRLCLCGFCSKDLKLSYRYGKRVIMMLKEVESLSSQGFFDVVSEATPFADVDEIPFQPTIVGQEIMLEKAWNRLMEDGSGILGLYGMGGVGKTTLLTKINNKFSKIDDRFDVVIWVVVSRSSTVRKIQRDIAEKVGLGGMEWSEKNDNQIAVDIHNVLRRRKFVLLLDDIWEKVNLKAVGVPYPSKDNGCKVAFTTRSRDVCGRMGVDDPMEVSCLQPEESWDLFQMKVGKNTLGSHPDIPGLARKVARKCRGLPLALNVIGEAMACKRTVHEWCHAIDVLTSSAIDFSGMEDEILHVLKYSYDNLNGELMKSCFLYCSLFPEDYLIDKEGLVDYWISEGFINEKEGRERNINQGYEIIGTLVRACLLLEEERNKSNVKMHDVVREMALWISSDLGKQKEKCIVRAGVGLREVPKVKDWNTVRKISLMNNEIEEIFDSHECAALTTLFLQKNDVVKISAEFFRCMPHLVVLDLSENQSLNELPEEISELASLRYFNLSYTCIHQLPVGLWTLKKLIHLNLEHMSSLGSILGISNLWNLRTLGLRDSRLLLDMSLVKELQLLEHLEVITLDISSSLVAEPLLCSQRLVECIKEVDFKYLKEESVRVLTLPTMGNLRKLGIKRCGMREIKIERTTSSSSRNKSPTTPCFSNLSRVFIAKCHGLKDLTWLLFAPNLTFLEVGFSKEVEDIISEEKAEEHSATIVPFRKLETLHLFELRGLKRIYAKALHFPCLKVIHVEKCEKLRKLPLDSKSGIAGEELVIYYGEREWIERVEWEDQATQLRFLPSSRWRWRET.

Gly-2 carries the N-myristoyl glycine lipid modification. A lipid anchor (S-palmitoyl cysteine) is attached at Cys-4. Positions 29-58 (IHNLSKNLASLQKAMRMLKARQYDVIRRLE) form a coiled coil. Residues 140–444 (SEATPFADVD…SEGFINEKEG (305 aa)) enclose the NB-ARC domain. 183–190 (GMGGVGKT) lines the ATP pocket. LRR repeat units lie at residues 518–539 (TVRKISLMNNEIEEIFDSHECA), 540–561 (ALTTLFLQKNDVVKISAEFFRC), 564–586 (HLVVLDLSENQSLNELPEEISEL), 588–610 (SLRYFNLSYTCIHQLPVGLWTLK), 611–633 (KLIHLNLEHMSSLGSILGISNLW), and 634–656 (NLRTLGLRDSRLLLDMSLVKELQ).

The protein belongs to the disease resistance NB-LRR family. In uninfected plants, interacts with PBS1 through the coiled coil domain. Homodimer.

It is found in the cell membrane. Its function is as follows. Disease resistance (R) protein that specifically recognizes the avrPphB type III effector avirulence protein from Pseudomonas syringae. Also confers resistance against Hyaloperonospora parasitica (downy mildew). Resistance proteins guard the plant against pathogens that contain an appropriate avirulence protein via an indirect interaction with this avirulence protein. That triggers a defense system including the hypersensitive response, which restricts the pathogen growth. Requires PBS1 to trigger the defense reaction against avrPphB. In case of infection by Pseudomonas syringae, AvrPphB triggers RPS5-mediated defense mechanism via the cleavage of PBS1, suggesting that the cleavage of PBS1 could trigger an exchange of ADP for ATP, thereby activating RPS5. May function as a fine-tuned sensor of alterations in the structure of the effector target PBS1. The protein is Disease resistance protein RPS5 (RPS5) of Arabidopsis thaliana (Mouse-ear cress).